Here is a 256-residue protein sequence, read N- to C-terminus: Sugar fermentation stimulation protein homolog (256 aa).

Residues Thr-128 to Thr-141 are compositionally biased toward low complexity. Positions Thr-128–Lys-149 are disordered.

Belongs to the SfsA family.

This is Sugar fermentation stimulation protein homolog from Shewanella sediminis (strain HAW-EB3).